Here is a 334-residue protein sequence, read N- to C-terminus: tRNA N6-adenosine threonylcarbamoyltransferase (334 aa).

Positions 111 and 115 each coordinate Fe cation. Residues 134-138, Asp167, Gly180, Asp184, and Asn272 each bind substrate; that span reads IVSGG. Asp300 is a Fe cation binding site.

This sequence belongs to the KAE1 / TsaD family. The cofactor is Fe(2+).

It localises to the cytoplasm. The enzyme catalyses L-threonylcarbamoyladenylate + adenosine(37) in tRNA = N(6)-L-threonylcarbamoyladenosine(37) in tRNA + AMP + H(+). Required for the formation of a threonylcarbamoyl group on adenosine at position 37 (t(6)A37) in tRNAs that read codons beginning with adenine. Is involved in the transfer of the threonylcarbamoyl moiety of threonylcarbamoyl-AMP (TC-AMP) to the N6 group of A37, together with TsaE and TsaB. TsaD likely plays a direct catalytic role in this reaction. The sequence is that of tRNA N6-adenosine threonylcarbamoyltransferase from Dictyoglomus turgidum (strain DSM 6724 / Z-1310).